The following is a 252-amino-acid chain: MMPLIDLWTALPLAKLEVGHHFYWYIGNLRVHGQVFITTWFVMALLIAVAFVASRNIQRVPSGIQNLMEYALEFIRDLTKSQMGEHEYRAWVPFVGTLFLFIFVCNWSGALVPWKLIELPEGELAAPTNDINTTVALALLVSLAYFYAGLRKRGLKYFTKYIEPTPVLLPIAILEDFTKPLSLSFRLFGNILADELVVSVLVLLVPLFVPLPVMVLGLFTSAIQALVFATLAATYIGEAMEGHGGDHEAAHS.

Transmembrane regions (helical) follow at residues glycine 33 to alanine 53, valine 92 to valine 112, aspartate 130 to leucine 150, leucine 196 to leucine 216, and glycine 217 to glycine 237.

It belongs to the ATPase A chain family. As to quaternary structure, F-type ATPases have 2 components, CF(1) - the catalytic core - and CF(0) - the membrane proton channel. CF(1) has five subunits: alpha(3), beta(3), gamma(1), delta(1), epsilon(1). CF(0) has four main subunits: a, b, b' and c.

The protein resides in the cellular thylakoid membrane. Key component of the proton channel; it plays a direct role in the translocation of protons across the membrane. This Thermosynechococcus vestitus (strain NIES-2133 / IAM M-273 / BP-1) protein is ATP synthase subunit a.